A 282-amino-acid chain; its full sequence is Pantothenate synthetase (282 aa).

Residue 31–38 (MGALHDGH) coordinates ATP. Catalysis depends on histidine 38, which acts as the Proton donor. Glutamine 62 serves as a coordination point for (R)-pantoate. Position 62 (glutamine 62) interacts with beta-alanine. 148 to 151 (GKKD) is an ATP binding site. (R)-pantoate is bound at residue glutamine 154. ATP-binding positions include valine 177 and 185-188 (KSSR).

It belongs to the pantothenate synthetase family. As to quaternary structure, homodimer.

Its subcellular location is the cytoplasm. It carries out the reaction (R)-pantoate + beta-alanine + ATP = (R)-pantothenate + AMP + diphosphate + H(+). It participates in cofactor biosynthesis; (R)-pantothenate biosynthesis; (R)-pantothenate from (R)-pantoate and beta-alanine: step 1/1. In terms of biological role, catalyzes the condensation of pantoate with beta-alanine in an ATP-dependent reaction via a pantoyl-adenylate intermediate. The chain is Pantothenate synthetase from Staphylococcus saprophyticus subsp. saprophyticus (strain ATCC 15305 / DSM 20229 / NCIMB 8711 / NCTC 7292 / S-41).